The following is a 562-amino-acid chain: Tissue-type plasminogen activator (562 aa).

Residues 1–22 (MDAMKRGLCCVLLLCGAVFVSP) form the signal peptide. Positions 23–32 (SQEIHARFRR) are excised as a propeptide. Residues 33–35 (GAR) constitute a propeptide, removed by plasmin. Residues 39 to 81 (VICRDEKTQMIYQQHQSWLRPVLRSNRVEYCWCNSGRAQCHSV) form the Fibronectin type-I domain. Cystine bridges form between Cys-41–Cys-71, Cys-69–Cys-78, Cys-86–Cys-97, Cys-91–Cys-108, Cys-110–Cys-119, Cys-127–Cys-208, Cys-148–Cys-190, Cys-179–Cys-203, Cys-215–Cys-296, Cys-236–Cys-278, Cys-267–Cys-291, Cys-299–Cys-430, Cys-342–Cys-358, Cys-350–Cys-419, Cys-444–Cys-519, Cys-476–Cys-492, and Cys-509–Cys-537. An important for binding to annexin A2 region spans residues 42 to 52 (RDEKTQMIYQQ). Residues 82 to 120 (PVKSCSEPRCFNGGTCQQALYFSDFVCQCPEGFAGKCCE) enclose the EGF-like domain. The O-linked (Fuc) threonine glycan is linked to Thr-96. Kringle domains lie at 127 to 208 (CYED…TPAC) and 215 to 296 (CYFG…VPSC). Asn-152 is a glycosylation site (N-linked (GlcNAc...) asparagine). Residue Asn-219 is glycosylated (N-linked (GlcNAc...) asparagine; partial). In terms of domain architecture, Peptidase S1 spans 311–561 (IKGGLFADIA…YLDWIRDNMR (251 aa)). Active-site charge relay system residues include His-357 and Asp-406. A glycan (N-linked (GlcNAc...) asparagine) is linked at Asn-483. The active-site Charge relay system is the Ser-513.

It belongs to the peptidase S1 family. In terms of assembly, heterodimer of chain A and chain B held by a disulfide bond. Forms a heterodimer with SERPINA5. Binds to fibrin with high affinity. This interaction leads to an increase in the catalytic efficiency of the enzyme between 100-fold and 1000-fold, due to an increase in affinity for plasminogen. Similarly, binding to heparin increases the activation of plasminogen. Binds to annexin A2, cytokeratin-8, fibronectin and laminin. Binds to mannose receptor and the low-density lipoprotein receptor-related protein (LRP1); these proteins are involved in TPA clearance. Yet unidentified interactions on endothelial cells and vascular smooth muscle cells (VSMC) lead to a 100-fold stimulation of plasminogen activation. In addition, binding to VSMC reduces TPA inhibition by PAI-1 by 30-fold. Binds LRP1B; binding is followed by internalization and degradation. Interacts with SERPINE1. In complex with SERPINE1, interacts with SORL1. Interacts with apyrase from Anopheles gambiae saliva; the interaction results in PLAT activation probably via an allosteric activation mechanism. In terms of processing, the single chain, almost fully active enzyme, can be further processed into a two-chain fully active form by a cleavage after Arg-310 catalyzed by plasmin, tissue kallikrein or factor Xa. Post-translationally, differential cell-specific N-linked glycosylation gives rise to two glycoforms, type I (glycosylated at Asn-219) and type II (not glycosylated at Asn-219). The single chain type I glycoform is less readily converted into the two-chain form by plasmin, and the two-chain type I glycoform has a lower activity than the two-chain type II glycoform in the presence of fibrin. N-glycosylation of Asn-152; the bound oligomannosidic glycan is involved in the interaction with the mannose receptor. In terms of processing, characterization of O-linked glycan was studied in Bowes melanoma cell line. In terms of tissue distribution, synthesized in numerous tissues (including tumors) and secreted into most extracellular body fluids, such as plasma, uterine fluid, saliva, gingival crevicular fluid, tears, seminal fluid, and milk.

The protein resides in the secreted. The protein localises to the extracellular space. It catalyses the reaction Specific cleavage of Arg-|-Val bond in plasminogen to form plasmin.. Its activity is regulated as follows. Inhibited by SERPINA5. Inhibited by SERPINE1. Converts the abundant, but inactive, zymogen plasminogen to plasmin by hydrolyzing a single Arg-Val bond in plasminogen. By controlling plasmin-mediated proteolysis, it plays an important role in tissue remodeling and degradation, in cell migration and many other physiopathological events. During oocyte activation, plays a role in cortical granule reaction in the zona reaction, which contributes to the block to polyspermy. This Homo sapiens (Human) protein is Tissue-type plasminogen activator.